The primary structure comprises 807 residues: Glycerol-3-phosphate acyltransferase (807 aa).

The HXXXXD motif signature appears at 308-313; that stretch reads CHRSHM.

The protein belongs to the GPAT/DAPAT family.

Its subcellular location is the cell inner membrane. The enzyme catalyses sn-glycerol 3-phosphate + an acyl-CoA = a 1-acyl-sn-glycero-3-phosphate + CoA. It participates in phospholipid metabolism; CDP-diacylglycerol biosynthesis; CDP-diacylglycerol from sn-glycerol 3-phosphate: step 1/3. The chain is Glycerol-3-phosphate acyltransferase from Shewanella sp. (strain W3-18-1).